A 122-amino-acid polypeptide reads, in one-letter code: Biogenesis of lysosome-related organelles complex 1 subunit BLS1 (122 aa).

Position 33 is a phosphoserine (Ser33).

Belongs to the BLOC1S1 family. In terms of assembly, component of the biogenesis of lysosome-related organelles complex-1 (BLOC-1) composed of at least BLI1, BLS1, CNL1, KXD1, SNN1 and VAB2.

The protein resides in the endosome. Component of the biogenesis of lysosome-related organelles complex-1 (BLOC-1), a complex involved in endosomal cargo sorting. This Saccharomyces cerevisiae (strain RM11-1a) (Baker's yeast) protein is Biogenesis of lysosome-related organelles complex 1 subunit BLS1 (BLS1).